The chain runs to 56 residues: Small ribosomal subunit protein uS14 (56 aa).

Residues Cys-21, Cys-24, Cys-39, and Cys-42 each coordinate Zn(2+).

It belongs to the universal ribosomal protein uS14 family. In terms of assembly, component of the 40S small ribosomal subunit. Requires Zn(2+) as cofactor.

Its subcellular location is the cytoplasm. It localises to the cytosol. The protein localises to the rough endoplasmic reticulum. In Ixodes scapularis (Black-legged tick), this protein is Small ribosomal subunit protein uS14 (RpS29).